Consider the following 931-residue polypeptide: Bifunctional uridylyltransferase/uridylyl-removing enzyme (931 aa).

Residues 1–383 are uridylyltransferase; it reads MDSVTPNSRP…KTGNSWRRVP (383 aa). The uridylyl-removing stretch occupies residues 384 to 739; it reads ESDDFIVDNN…VGFDPARGVT (356 aa). Residues 499–622 form the HD domain; it reads VDEHLIRCIG…VQSVEQMKLL (124 aa). ACT domains lie at 740 to 822 and 851 to 931; these read ELTI…AVAR and VIEV…QPAA.

The protein belongs to the GlnD family. It depends on Mg(2+) as a cofactor.

It catalyses the reaction [protein-PII]-L-tyrosine + UTP = [protein-PII]-uridylyl-L-tyrosine + diphosphate. The enzyme catalyses [protein-PII]-uridylyl-L-tyrosine + H2O = [protein-PII]-L-tyrosine + UMP + H(+). Uridylyltransferase (UTase) activity is inhibited by glutamine, while glutamine activates uridylyl-removing (UR) activity. Its function is as follows. Modifies, by uridylylation and deuridylylation, the PII regulatory proteins (GlnB and homologs), in response to the nitrogen status of the cell that GlnD senses through the glutamine level. Under low glutamine levels, catalyzes the conversion of the PII proteins and UTP to PII-UMP and PPi, while under higher glutamine levels, GlnD hydrolyzes PII-UMP to PII and UMP (deuridylylation). Thus, controls uridylylation state and activity of the PII proteins, and plays an important role in the regulation of nitrogen fixation and metabolism. This is Bifunctional uridylyltransferase/uridylyl-removing enzyme from Bradyrhizobium sp. (strain BTAi1 / ATCC BAA-1182).